Reading from the N-terminus, the 398-residue chain is Metallophosphoesterase 1 (398 aa).

The helical transmembrane segment at 25-45 (VCFVSSVLIFCEFFIYYLVIF) threads the bilayer. Residues aspartate 75, aspartate 117, asparagine 155, histidine 251, histidine 305, and histidine 307 each coordinate a divalent metal cation. A helical membrane pass occupies residues 359 to 379 (VFAIYWAAGALLVVLVLAHFQ). Residues 394 to 398 (KHKAA) carry the Di-lysine motif motif.

Belongs to the metallophosphoesterase superfamily. MPPE1 family. Requires Mn(2+) as cofactor.

Its subcellular location is the endoplasmic reticulum-Golgi intermediate compartment membrane. Metallophosphoesterase that catalyzes the removal of a side-chain ethanolamine-phosphate (EtNP) from the second mannose of the GPI-anchor protein intermediate. Participates in the glycan remodeling steps of GPI-anchor maturation to allow an efficient transport of GPI-anchor proteins from the endoplasmic reticulum to the Golgi. This chain is Metallophosphoesterase 1, found in Gallus gallus (Chicken).